The primary structure comprises 287 residues: Acetylglutamate kinase (287 aa).

Substrate-binding positions include 70 to 71 (GG), Arg-92, and Asn-184.

It belongs to the acetylglutamate kinase family. ArgB subfamily.

The protein localises to the cytoplasm. It catalyses the reaction N-acetyl-L-glutamate + ATP = N-acetyl-L-glutamyl 5-phosphate + ADP. The protein operates within amino-acid biosynthesis; L-arginine biosynthesis; N(2)-acetyl-L-ornithine from L-glutamate: step 2/4. Its function is as follows. Catalyzes the ATP-dependent phosphorylation of N-acetyl-L-glutamate. This chain is Acetylglutamate kinase, found in Ruegeria pomeroyi (strain ATCC 700808 / DSM 15171 / DSS-3) (Silicibacter pomeroyi).